The chain runs to 115 residues: NADH-ubiquinone oxidoreductase chain 3 (115 aa).

3 helical membrane passes run 3–23 (LIMV…VAFW), 55–75 (FFLV…LLPI), and 84–104 (INTM…GLAY).

The protein belongs to the complex I subunit 3 family. As to quaternary structure, core subunit of respiratory chain NADH dehydrogenase (Complex I) which is composed of 45 different subunits. Interacts with TMEM186. Interacts with TMEM242.

It localises to the mitochondrion inner membrane. It carries out the reaction a ubiquinone + NADH + 5 H(+)(in) = a ubiquinol + NAD(+) + 4 H(+)(out). Core subunit of the mitochondrial membrane respiratory chain NADH dehydrogenase (Complex I) which catalyzes electron transfer from NADH through the respiratory chain, using ubiquinone as an electron acceptor. Essential for the catalytic activity of complex I. The protein is NADH-ubiquinone oxidoreductase chain 3 of Scotinomys teguina (Alston's brown mouse).